Consider the following 666-residue polypeptide: tRNA 5-methylaminomethyl-2-thiouridine biosynthesis bifunctional protein MnmC (666 aa).

The interval 1–253 is tRNA (mnm(5)s(2)U34)-methyltransferase; sequence MSSPFVPIIT…KRHMICAHYE (253 aa). An FAD-dependent cmnm(5)s(2)U34 oxidoreductase region spans residues 283-666; it reads VGGGLAGCFI…FLRKKIIQGP (384 aa).

The protein in the N-terminal section; belongs to the methyltransferase superfamily. tRNA (mnm(5)s(2)U34)-methyltransferase family. It in the C-terminal section; belongs to the DAO family. FAD serves as cofactor.

The protein localises to the cytoplasm. It carries out the reaction 5-aminomethyl-2-thiouridine(34) in tRNA + S-adenosyl-L-methionine = 5-methylaminomethyl-2-thiouridine(34) in tRNA + S-adenosyl-L-homocysteine + H(+). In terms of biological role, catalyzes the last two steps in the biosynthesis of 5-methylaminomethyl-2-thiouridine (mnm(5)s(2)U) at the wobble position (U34) in tRNA. Catalyzes the FAD-dependent demodification of cmnm(5)s(2)U34 to nm(5)s(2)U34, followed by the transfer of a methyl group from S-adenosyl-L-methionine to nm(5)s(2)U34, to form mnm(5)s(2)U34. This is tRNA 5-methylaminomethyl-2-thiouridine biosynthesis bifunctional protein MnmC from Legionella pneumophila subsp. pneumophila (strain Philadelphia 1 / ATCC 33152 / DSM 7513).